A 321-amino-acid polypeptide reads, in one-letter code: Glucokinase (321 aa).

ATP is bound at residue Gly-8–Thr-13.

It belongs to the bacterial glucokinase family.

Its subcellular location is the cytoplasm. The catalysed reaction is D-glucose + ATP = D-glucose 6-phosphate + ADP + H(+). This chain is Glucokinase, found in Salmonella arizonae (strain ATCC BAA-731 / CDC346-86 / RSK2980).